Consider the following 1099-residue polypeptide: MSSQTKFKKDKEIIAEYEAQIKEIRTQLVEQFKCLEQQSESRLQLLQDLQEFFRRKAEIELEYSRSLEKLAERFSSKIRSSREHQFKKDQYLLSPVNCWYLVLHQTRRESRDHATLNDIFMNNVIVRLSQISEDVIRLFKKSKEIGLQMHEELLKVTNELYTVMKTYHMYHAESISAESKLKEAEKQEEKQFNKSGDLSMNLLRHEDRPQRRSSVKKIEKMKEKRQAKYSENKLKCTKARNDYLLNLAATNAAISKYYIHDVSDLIDCCDLGFHASLARTFRTYLSAEYNLETSRHEGLDVIENAVDNLDSRSDKHTVMDMCNQVFCPPLKFEFQPHMGDEVCQVSAQQPVQTELLMRYHQLQSRLATLKIENEEVRKTLDATMQTLQDMLTVEDFDVSDAFQHSRSTESVKSAASETYMSKINIAKRRANQQETEMFYFTKFKEYVNGSNLITKLQAKHDLLKQTLGEGERAECGTTRPPCLPPKPQKMRRPRPLSVYSHKLFNGSMEAFIKDSGQAIPLVVESCIRYINLYGLQQQGIFRVPGSQVEVNDIKNSFERGEDPLVDDQNERDINSVAGVLKLYFRGLENPLFPKERFQDLISTIKLENPAERVHQIQQILVTLPRVVIVVMRYLFAFLNHLSQYSDENMMDPYNLAICFGPTLMHIPDGQDPVSCQAHINEVIKTIIIHHEAIFPSPRELEGPVYEKCMAGGEEYCDSPHSEPGAIDEVDHDNGTEPHTSDEEVEQIEAIAKFDYMGRSPRELSFKKGASLLLYHRASEDWWEGRHNGVDGLIPHQYIVVQDMDDAFSDSLSQKADSEASSGPLLDDKASSKNDLQSPTEHISDYGFGGVMGRVRLRSDGAAIPRRRSGGDTHSPPRGLGPSIDTPPRAAACPSSPHKIPLTRGRIESPEKRRMATFGSAGSINYPDKKALSEGHSMRSTCGSTRHSSLGDHKSLEAEALAEDIEKTMSTALHELRELERQNTVKQAPDVVLDTLEPLKNPPGPVSSEPASPLHTIVIRDPDAAMRRSSSSSTEMMTTFKPALSARLAGAQLRPPPMRPVRPVVQHRSSSSSSSGVGSPAVTPTEKMFPNSSADKSGTM.

In terms of domain architecture, F-BAR spans 19–314 (AQIKEIRTQL…AVDNLDSRSD (296 aa)). The disordered stretch occupies residues 205 to 225 (HEDRPQRRSSVKKIEKMKEKR). The stretch at 352–392 (QTELLMRYHQLQSRLATLKIENEEVRKTLDATMQTLQDMLT) forms a coiled coil. The segment at 471–493 (ERAECGTTRPPCLPPKPQKMRRP) is disordered. The Rho-GAP domain maps to 506–694 (GSMEAFIKDS…TIIIHHEAIF (189 aa)). Residues 744 to 803 (VEQIEAIAKFDYMGRSPRELSFKKGASLLLYHRASEDWWEGRHNGVDGLIPHQYIVVQDM) enclose the SH3 domain. Residues 809-820 (DSLSQKADSEAS) are compositionally biased toward polar residues. The interval 809–847 (DSLSQKADSEASSGPLLDDKASSKNDLQSPTEHISDYGF) is disordered. Residues Ser817, Ser820, Ser821, Ser837, and Ser858 each carry the phosphoserine modification. 2 disordered regions span residues 861-911 (AAIP…SPEK) and 926-950 (PDKKALSEGHSMRSTCGSTRHSSLG). Residues 926-936 (PDKKALSEGHS) are compositionally biased toward basic and acidic residues. Residues 937–947 (MRSTCGSTRHS) show a composition bias toward polar residues. Residues 952–987 (HKSLEAEALAEDIEKTMSTALHELRELERQNTVKQA) are a coiled coil. At Ser954 the chain carries Phosphoserine. The interval 995-1099 (LEPLKNPPGP…NSSADKSGTM (105 aa)) is disordered. Composition is skewed to low complexity over residues 1026–1038 (RRSSSSSTEMMTT) and 1060–1074 (VRPVVQHRSSSSSSS). Residues 1089-1099 (PNSSADKSGTM) show a composition bias toward polar residues.

As to quaternary structure, homodimer. Forms a heterooligomer with SRGAP1 and SRGAP2 through its F-BAR domain. Interacts with WASF1. Probably interacts with ROBO1. Interacts with FASLG. Highly expressed in adult and fetal brain. Expressed at low levels in kidney. Isoform 3 is expressed in the kidney but is absent in the brain.

Functionally, GTPase-activating protein for RAC1 and perhaps Cdc42, but not for RhoA small GTPase. May attenuate RAC1 signaling in neurons. The protein is SLIT-ROBO Rho GTPase-activating protein 3 (SRGAP3) of Homo sapiens (Human).